The chain runs to 348 residues: D-alanine--D-alanine ligase (348 aa).

Positions 132–334 (KRVLESIGIP…YPDLIEELVT (203 aa)) constitute an ATP-grasp domain. An ATP-binding site is contributed by 162–217 (LARLTFPIFVKPANMGSSVGISKAQTKVELRKAIQLALTYDSRVLIEQGVIAREIE). Residues aspartate 288, glutamate 301, and asparagine 303 each coordinate Mg(2+).

Belongs to the D-alanine--D-alanine ligase family. Requires Mg(2+) as cofactor. Mn(2+) serves as cofactor.

The protein localises to the cytoplasm. The catalysed reaction is 2 D-alanine + ATP = D-alanyl-D-alanine + ADP + phosphate + H(+). It functions in the pathway cell wall biogenesis; peptidoglycan biosynthesis. Its function is as follows. Cell wall formation. This chain is D-alanine--D-alanine ligase, found in Streptococcus pyogenes serotype M4 (strain MGAS10750).